Reading from the N-terminus, the 448-residue chain is Histidinol dehydrogenase (448 aa).

Positions 136, 197, and 220 each coordinate NAD(+). Substrate contacts are provided by S243, Q265, and H268. Residues Q265 and H268 each contribute to the Zn(2+) site. Active-site proton acceptor residues include E333 and H334. Residues H334, D367, E421, and H426 each contribute to the substrate site. Residue D367 participates in Zn(2+) binding. Residue H426 coordinates Zn(2+).

This sequence belongs to the histidinol dehydrogenase family. The cofactor is Zn(2+).

It catalyses the reaction L-histidinol + 2 NAD(+) + H2O = L-histidine + 2 NADH + 3 H(+). Its pathway is amino-acid biosynthesis; L-histidine biosynthesis; L-histidine from 5-phospho-alpha-D-ribose 1-diphosphate: step 9/9. Its function is as follows. Catalyzes the sequential NAD-dependent oxidations of L-histidinol to L-histidinaldehyde and then to L-histidine. This is Histidinol dehydrogenase from Pseudomonas savastanoi pv. phaseolicola (strain 1448A / Race 6) (Pseudomonas syringae pv. phaseolicola (strain 1448A / Race 6)).